Consider the following 358-residue polypeptide: 3-dehydroquinate synthase (358 aa).

Residues 70 to 75 (DGEQYK), 104 to 108 (GVVGD), 128 to 129 (TT), K141, K150, and 168 to 171 (CLNT) contribute to the NAD(+) site. The Zn(2+) site is built by E183, H246, and H263.

This sequence belongs to the sugar phosphate cyclases superfamily. Dehydroquinate synthase family. It depends on Co(2+) as a cofactor. Zn(2+) is required as a cofactor. NAD(+) serves as cofactor.

The protein resides in the cytoplasm. The enzyme catalyses 7-phospho-2-dehydro-3-deoxy-D-arabino-heptonate = 3-dehydroquinate + phosphate. It functions in the pathway metabolic intermediate biosynthesis; chorismate biosynthesis; chorismate from D-erythrose 4-phosphate and phosphoenolpyruvate: step 2/7. Catalyzes the conversion of 3-deoxy-D-arabino-heptulosonate 7-phosphate (DAHP) to dehydroquinate (DHQ). This is 3-dehydroquinate synthase from Shewanella sediminis (strain HAW-EB3).